We begin with the raw amino-acid sequence, 297 residues long: Protein phosphatase PTC7 homolog (297 aa).

A mitochondrion-targeting transit peptide spans 1–27 (MLSVLSYGRLVARAVIGGLSQTDSRDY). One can recognise a PPM-type phosphatase domain in the interval 28–292 (SLVSASFGFG…DDITVLLSIV (265 aa)). Positions 71, 72, and 216 each coordinate Mn(2+).

This sequence belongs to the PP2C family. Mg(2+) serves as cofactor. Requires Mn(2+) as cofactor.

The protein localises to the mitochondrion matrix. The catalysed reaction is O-phospho-L-seryl-[protein] + H2O = L-seryl-[protein] + phosphate. It carries out the reaction O-phospho-L-threonyl-[protein] + H2O = L-threonyl-[protein] + phosphate. Protein phosphatase which positively regulates biosynthesis of the ubiquinone, coenzyme Q. Dephosphorylates the ubiquinone biosynthesis protein coq7 which is likely to lead to its activation. The chain is Protein phosphatase PTC7 homolog (pptc7) from Danio rerio (Zebrafish).